The following is a 195-amino-acid chain: NADH-quinone oxidoreductase subunit C (195 aa).

This sequence belongs to the complex I 30 kDa subunit family. In terms of assembly, NDH-1 is composed of 14 different subunits. Subunits NuoB, C, D, E, F, and G constitute the peripheral sector of the complex.

It localises to the cell inner membrane. The enzyme catalyses a quinone + NADH + 5 H(+)(in) = a quinol + NAD(+) + 4 H(+)(out). Functionally, NDH-1 shuttles electrons from NADH, via FMN and iron-sulfur (Fe-S) centers, to quinones in the respiratory chain. The immediate electron acceptor for the enzyme in this species is believed to be ubiquinone. Couples the redox reaction to proton translocation (for every two electrons transferred, four hydrogen ions are translocated across the cytoplasmic membrane), and thus conserves the redox energy in a proton gradient. This Laribacter hongkongensis (strain HLHK9) protein is NADH-quinone oxidoreductase subunit C.